Here is a 233-residue protein sequence, read N- to C-terminus: Small ribosomal subunit protein uS2 (233 aa).

Belongs to the universal ribosomal protein uS2 family.

The polypeptide is Small ribosomal subunit protein uS2 (Clostridium novyi (strain NT)).